Here is a 202-residue protein sequence, read N- to C-terminus: Guanylate kinase (202 aa).

The 179-residue stretch at 3 to 181 (GNLFIITAPS…ALEDLRAIIR (179 aa)) folds into the Guanylate kinase-like domain. ATP is bound at residue 10–17 (APSGAGKT).

It belongs to the guanylate kinase family.

The protein resides in the cytoplasm. It catalyses the reaction GMP + ATP = GDP + ADP. In terms of biological role, essential for recycling GMP and indirectly, cGMP. This Methylobacillus flagellatus (strain ATCC 51484 / DSM 6875 / VKM B-1610 / KT) protein is Guanylate kinase.